The primary structure comprises 197 residues: Nascent polypeptide-associated complex subunit alpha (197 aa).

Over residues 1 to 20 (MAEPVEDSVDEISSEGDSDV) the composition is skewed to acidic residues. Disordered stretches follow at residues 1–46 (MAEP…RKLL) and 120–154 (GADR…SKAD). The region spanning 36–101 (DKNERKSRKL…AKVEDMSQNS (66 aa)) is the NAC-A/B domain. A compositionally biased stretch (basic and acidic residues) spans 134–154 (SGHDHAHDHDHSHGDCASKAD). Residues 158 to 195 (VNQSDIDLVVSQVGCTREQAVEALIKNKGDIVETIMQL) form the UBA domain.

The protein belongs to the NAC-alpha family.

Functionally, may promote appropriate targeting of ribosome-nascent polypeptide complexes. This Babesia divergens protein is Nascent polypeptide-associated complex subunit alpha.